The chain runs to 330 residues: Neurogenic differentiation factor 4 (330 aa).

A disordered region spans residues 1–79; that stretch reads MTKTYTKAKE…RGPKKKKMTK (79 aa). Over residues 25 to 35 the composition is skewed to basic and acidic residues; the sequence is LSSKDELKAEN. Residues 52–64 are compositionally biased toward acidic residues; sequence DSIEEEEEEEDDG. The span at 67-79 shows a compositional bias: basic residues; it reads PKRRGPKKKKMTK. The Nuclear localization signal motif lies at 73–79; that stretch reads KKKKMTK. The 53-residue stretch at 87 to 139 folds into the bHLH domain; the sequence is ARRVKANARERTRMHGLNDALDNLRRVMPCYSKTQKLSKIETLRLARNYIWAL. Residues 162-183 form a leucine-zipper region; the sequence is LSQPTSNLVAGCLQLGPQTLFL.

In terms of assembly, efficient DNA binding requires dimerization with another bHLH protein. In terms of processing, serine or threonine phosphorylation within the basic region may regulate neurogenic activity. Expressed in both the developing central nervous system and peripheral nervous system.

Its subcellular location is the nucleus. Probably acts as a transcriptional activator. Mediates neuronal differentiation. Required for the regulation of amacrine cell fate specification in the retina. The chain is Neurogenic differentiation factor 4 (NEUROD4) from Gallus gallus (Chicken).